Reading from the N-terminus, the 110-residue chain is Large ribosomal subunit protein P2 (110 aa).

O-(pantetheine 4'-phosphoryl)serine; in acyl carrier protein form is present on S59. Positions 62 to 110 (LASVPSGGAAPAAAAGGAAAGGAAEEKAEDKPAEKDEESDDDMGFGLFD) are disordered. Residues 63 to 84 (ASVPSGGAAPAAAAGGAAAGGA) are compositionally biased toward low complexity. Over residues 85 to 95 (AEEKAEDKPAE) the composition is skewed to basic and acidic residues. S100 carries the phosphoserine; in ribosomal stalk form modification.

It belongs to the eukaryotic ribosomal protein P1/P2 family. In terms of assembly, the phosphorylated form is part of the ribosomal stalk involved in the interaction of the elongation factors with the ribosome during protein synthesis. The phosphopantetheinylated form is part of the 10S triacylglycerol biosynthetic complex involved in de novo fatty acid biosynthesis. 4'-phosphopantetheine is transferred from CoA to a specific serine by acpS. This modification is essential for activity because fatty acids are bound in thioester linkage to the sulfhydryl of the prosthetic group.

The protein resides in the cytoplasm. Probable bifunctional protein. The phosphorylated protein plays an important role in the elongation step of protein synthesis. The phosphopantetheinylated protein acts as an acyl carrier protein. The protein is Large ribosomal subunit protein P2 of Rhodotorula glutinis (Yeast).